The sequence spans 91 residues: Large ribosomal subunit protein uL22 (91 aa).

It belongs to the universal ribosomal protein uL22 family. As to quaternary structure, part of the 50S ribosomal subunit.

Its function is as follows. This protein binds specifically to 23S rRNA; its binding is stimulated by other ribosomal proteins, e.g. L4, L17, and L20. It is important during the early stages of 50S assembly. It makes multiple contacts with different domains of the 23S rRNA in the assembled 50S subunit and ribosome. The globular domain of the protein is located near the polypeptide exit tunnel on the outside of the subunit, while an extended beta-hairpin is found that lines the wall of the exit tunnel in the center of the 70S ribosome. The protein is Large ribosomal subunit protein uL22 (rplV) of Pigeon pea witches'-broom phytoplasma.